Consider the following 215-residue polypeptide: Uracil phosphoribosyltransferase (215 aa).

5-phospho-alpha-D-ribose 1-diphosphate contacts are provided by residues Arg77, Arg102, and 129–137; that span reads DPMLATGGS. Residues Ile193 and 198–200 contribute to the uracil site; that span reads GDA. Residue Asp199 participates in 5-phospho-alpha-D-ribose 1-diphosphate binding.

It belongs to the UPRTase family. Mg(2+) is required as a cofactor.

The catalysed reaction is UMP + diphosphate = 5-phospho-alpha-D-ribose 1-diphosphate + uracil. It participates in pyrimidine metabolism; UMP biosynthesis via salvage pathway; UMP from uracil: step 1/1. With respect to regulation, allosterically activated by GTP. Functionally, catalyzes the conversion of uracil and 5-phospho-alpha-D-ribose 1-diphosphate (PRPP) to UMP and diphosphate. The chain is Uracil phosphoribosyltransferase from Corynebacterium urealyticum (strain ATCC 43042 / DSM 7109).